A 92-amino-acid chain; its full sequence is Small ribosomal subunit protein uS19 (92 aa).

Belongs to the universal ribosomal protein uS19 family.

Its function is as follows. Protein S19 forms a complex with S13 that binds strongly to the 16S ribosomal RNA. This chain is Small ribosomal subunit protein uS19, found in Tolumonas auensis (strain DSM 9187 / NBRC 110442 / TA 4).